The following is a 132-amino-acid chain: Cytochrome c' (132 aa).

Positions 10, 11, 65, 122, 125, and 126 each coordinate heme c.

Post-translationally, binds 1 heme c group covalently per subunit.

Its function is as follows. Cytochrome c' is the most widely occurring bacterial c-type cytochrome. Cytochromes c' are high-spin proteins and the heme has no sixth ligand. Their exact function is not known. The sequence is that of Cytochrome c' from Halomonas halodenitrificans (strain ATCC 12084 / NCIMB 8669) (Paracoccus halodenitrificans).